The following is a 161-amino-acid chain: Small ribosomal subunit protein uS9 (161 aa).

Belongs to the universal ribosomal protein uS9 family.

The sequence is that of Small ribosomal subunit protein uS9 from Bartonella bacilliformis (strain ATCC 35685 / KC583 / Herrer 020/F12,63).